A 475-amino-acid chain; its full sequence is Putative poly(A) polymerase catalytic subunit (475 aa).

This sequence belongs to the poxviridae poly(A) polymerase catalytic subunit family. Highly divergent.

It is found in the virion. It carries out the reaction RNA(n) + ATP = RNA(n)-3'-adenine ribonucleotide + diphosphate. Polymerase that creates the 3'-poly(A) tail of mRNA's. The chain is Putative poly(A) polymerase catalytic subunit from Ornithodoros (relapsing fever ticks).